The sequence spans 316 residues: MVSTHNRDKPWDTDDIDKWKIEEFKEEDNASGQPFAEESSFMTLFPKYRESYLKTIWNDVTRALDKHNIACVLDLVEGSMTVKTTRKTYDPAIILKARDLIKLLARSVPFPQAVKILQDDMACDVIKIGNFVTNKERFVKRRQRLVGPNGNTLKALELLTKCYILVQGNTVSAMGPFKGLKEVRRVVEDCMKNIHPIYHIKELMIKRELAKRPELANEDWSRFLPMFKKRNVARKKPKKIRNVEKKVYTPFPPAQLPRKVDLEIESGEYFLSKREKQMKKLNEQKEKQMEREIERQEERAKDFIAPEEEAYKPNQN.

The KH domain maps to 122–192 (ACDVIKIGNF…VRRVVEDCMK (71 aa)). Residues 279–304 (KKLNEQKEKQMEREIERQEERAKDFI) show a composition bias toward basic and acidic residues. The interval 279-316 (KKLNEQKEKQMEREIERQEERAKDFIAPEEEAYKPNQN) is disordered.

The protein belongs to the KRR1 family. In terms of assembly, component of the ribosomal small subunit (SSU) processome composed of at least 40 protein subunits and snoRNA U3. Interacts with snoRNA U3. Interacts with MPP10, KRI1 and with ribosomal proteins RPS1A, RPS4A, RPS4B, RPS8A, RPS8B, RPS11A, RPS11B, RPS13, RPS24, RPS25, RPL4A, RPL7B, RPL8, RPL23, RPL25 and RPL28.

The protein localises to the nucleus. The protein resides in the nucleolus. Required for 40S ribosome biogenesis. Involved in nucleolar processing of pre-18S ribosomal RNA and ribosome assembly. Essential for vegetative growth. The chain is KRR1 small subunit processome component from Saccharomyces cerevisiae (strain RM11-1a) (Baker's yeast).